The primary structure comprises 520 residues: Interferon lambda receptor 1 (520 aa).

Residues 1–20 (MAGPERWGPLLLCLLQAAPG) form the signal peptide. Topologically, residues 21–228 (RPRLAPPQNV…LLEVPEANWA (208 aa)) are extracellular. Positions 26–126 (PPQNVTLLSQ…LDYLFEVEPA (101 aa)) constitute a Fibronectin type-III domain. N-linked (GlcNAc...) asparagine glycans are attached at residues Asn29 and Asn36. 2 disulfides stabilise this stretch: Cys74–Cys82 and Cys86–Cys150. N-linked (GlcNAc...) asparagine glycans are attached at residues Asn142 and Asn169. Cys195 and Cys217 are oxidised to a cystine. Residues 229 to 249 (FLVLPSLLILLLVIAAGGVIW) traverse the membrane as a helical segment. The Cytoplasmic portion of the chain corresponds to 250-520 (KTLMGNPWFQ…GRTLGHYMAR (271 aa)). Disordered regions lie at residues 302 to 439 (VRPT…FLEE) and 477 to 520 (ESSP…YMAR). The span at 323-336 (AEDEEEEDEEDTED) shows a compositional bias: acidic residues. Low complexity predominate over residues 380–392 (SSAWDSSDRSWAS). Positions 479 to 495 (SPEEEEEARESEIEDSD) are enriched in acidic residues.

Belongs to the type II cytokine receptor family. Heterodimer with IL10RB. Post-translationally, ubiquitinated by FBXO45-containing E3 ligase leading to proteasomal degradation. As to expression, widely expressed.

It localises to the membrane. Its function is as follows. The IFNLR1/IL10RB dimer is a receptor for the cytokine ligands IFNL2 and IFNL3 and mediates their antiviral activity. The ligand/receptor complex stimulate the activation of the JAK/STAT signaling pathway leading to the expression of IFN-stimulated genes (ISG), which contribute to the antiviral state. Determines the cell type specificity of the lambda interferon action. Shows a more restricted pattern of expression in the epithelial tissues thereby limiting responses to lambda interferons primarily to epithelial cells of the respiratory, gastrointestinal, and reproductive tracts. Seems not to be essential for early virus-activated host defense in vaginal infection, but plays an important role in Toll-like receptor (TLR)-induced antiviral defense. Plays a significant role in the antiviral immune defense in the intestinal epithelium. This Homo sapiens (Human) protein is Interferon lambda receptor 1 (IFNLR1).